The primary structure comprises 156 residues: Transcription elongation factor GreA (156 aa).

Positions Met-7–Arg-27 form a coiled coil.

It belongs to the GreA/GreB family.

Functionally, necessary for efficient RNA polymerase transcription elongation past template-encoded arresting sites. The arresting sites in DNA have the property of trapping a certain fraction of elongating RNA polymerases that pass through, resulting in locked ternary complexes. Cleavage of the nascent transcript by cleavage factors such as GreA or GreB allows the resumption of elongation from the new 3'terminus. GreA releases sequences of 2 to 3 nucleotides. The protein is Transcription elongation factor GreA of Lactococcus lactis subsp. lactis (strain IL1403) (Streptococcus lactis).